The following is a 279-amino-acid chain: MKVYLCAISNISSGVCAEDCKFCTQSTKYRADIPRYKYKSIETIVEEAKKAKAAKAIGFCLVTAGKGIDDKILDFVTQAARAVKKEVPDISLIGCNGTAEVWQLKELKHAGIDNYNHNLETAKSFYEQICSTHSWEERYQTCLNAKEAGLNLCTGGIFGLGESKEQREEMMDQIASLEPMSVPINFYHPNEALPLPQTTIDPSDALSIIQDMRKRVPNAMIMVAGGRELVFGEQWPKILDAGANAIVIGDYLTTKGERPDKDIQTLQKLGVEIATSCHE.

The 227-residue stretch at 1-227 (MKVYLCAISN…NAMIMVAGGR (227 aa)) folds into the Radical SAM core domain. Positions 16, 20, and 23 each coordinate [4Fe-4S] cluster. [2Fe-2S] cluster is bound by residues cysteine 60, cysteine 95, and cysteine 153.

Belongs to the radical SAM superfamily. Biotin synthase family. Homodimer. The cofactor is [4Fe-4S] cluster. Requires [2Fe-2S] cluster as cofactor.

The enzyme catalyses (4R,5S)-dethiobiotin + (sulfur carrier)-SH + 2 reduced [2Fe-2S]-[ferredoxin] + 2 S-adenosyl-L-methionine = (sulfur carrier)-H + biotin + 2 5'-deoxyadenosine + 2 L-methionine + 2 oxidized [2Fe-2S]-[ferredoxin]. It participates in cofactor biosynthesis; biotin biosynthesis; biotin from 7,8-diaminononanoate: step 2/2. In terms of biological role, catalyzes the conversion of dethiobiotin (DTB) to biotin by the insertion of a sulfur atom into dethiobiotin via a radical-based mechanism. This is Biotin synthase from Nitratiruptor sp. (strain SB155-2).